The primary structure comprises 528 residues: Ecdysteroid UDP-glucosyltransferase (528 aa).

The N-terminal stretch at Met1–Ala32 is a signal peptide.

This sequence belongs to the UDP-glycosyltransferase family.

Catalyzes the transfer of glucose from UDP-glucose to ecdysteroids which are insect molting hormones. Expression of egt interferes with normal insect development and block molting. The protein is Ecdysteroid UDP-glucosyltransferase (EGT) of Mamestra brassicae nuclear polyhedrosis virus (MbNPV).